Reading from the N-terminus, the 91-residue chain is UPF0358 protein SAS1047 (91 aa).

The protein belongs to the UPF0358 family.

This chain is UPF0358 protein SAS1047, found in Staphylococcus aureus (strain MSSA476).